Consider the following 158-residue polypeptide: NAD(P)H-quinone oxidoreductase subunit J, chloroplastic (158 aa).

It belongs to the complex I 30 kDa subunit family. As to quaternary structure, NDH is composed of at least 16 different subunits, 5 of which are encoded in the nucleus.

It is found in the plastid. It localises to the chloroplast thylakoid membrane. It carries out the reaction a plastoquinone + NADH + (n+1) H(+)(in) = a plastoquinol + NAD(+) + n H(+)(out). It catalyses the reaction a plastoquinone + NADPH + (n+1) H(+)(in) = a plastoquinol + NADP(+) + n H(+)(out). Its function is as follows. NDH shuttles electrons from NAD(P)H:plastoquinone, via FMN and iron-sulfur (Fe-S) centers, to quinones in the photosynthetic chain and possibly in a chloroplast respiratory chain. The immediate electron acceptor for the enzyme in this species is believed to be plastoquinone. Couples the redox reaction to proton translocation, and thus conserves the redox energy in a proton gradient. The protein is NAD(P)H-quinone oxidoreductase subunit J, chloroplastic of Ranunculus macranthus (Large buttercup).